Reading from the N-terminus, the 1530-residue chain is Coiled-coil domain-containing protein 141 (1530 aa).

The Spectrin repeat unit spans residues 49–127; sequence NLLEIGSSQD…SMLERRRELL (79 aa). Phosphothreonine is present on Thr91. Coiled coils occupy residues 220-251, 758-785, and 865-967; these read IDSL…VLQL, LKEK…YEEI, and AKSL…VNKK. Disordered regions lie at residues 1153–1240, 1259–1285, 1324–1356, and 1369–1403; these read SEER…PASS, LGKA…DTFT, PREV…SNVT, and SPGL…SVVS. Polar residues predominate over residues 1334–1345; that stretch reads PSSQAQEISLGT. The Ig-like domain maps to 1409–1497; it reads PHFSRLLSNV…GTLSSKAILH (89 aa).

Interacts with DISC1. Interacts preferentially with phosphorylated forms of myosin regulatory light chain (MRLC). Interacts (via the N-terminal region) with HDAC6; inhibits the deacetylase activity of HDAC6. Interacts with KIBRA (via the C-terminal region); retains AMPAR in the cytosol after internalization. Post-translationally, ubiquitinated and degradated by the CDC20-APC/C pathway. During brain development, CDC20-APC/C complex degrades CCDC141 after centrosome translocation into the dilated area. CCDC141 is restabilized in the dilation until the centrosome enters the dilation, at which point it is once again immediately destabilized by CDC20-APC/C complex. The oscillatory regulation of CCDC141 protein is needed for proper cortical migration. Phosphorylation at Thr-91 by PLK1 affects CCDC141 degradation.

Its subcellular location is the cytoplasm. It is found in the cytoskeleton. It localises to the microtubule organizing center. The protein resides in the centrosome. Functionally, plays a critical role in cortical radial and GnRH neurons migration during brain development. Regulates cortical radial migration by negatively controlling the activity of histone deacetylase 6 (HDAC6) and promotes centrosome maturation. CAMDI is required for dilation formation of cortical neurons during radial migration. Plays a critical role in learning and memory performance through regulation of AMPA-selective glutamate receptors (AMPARs) cell surface expression in competition with KIBRA. This is Coiled-coil domain-containing protein 141 from Rattus norvegicus (Rat).